Reading from the N-terminus, the 283-residue chain is Light-independent protochlorophyllide reductase iron-sulfur ATP-binding protein (283 aa).

ATP contacts are provided by residues 15 to 20 (GIGKST) and Lys-44. Ser-19 contributes to the Mg(2+) binding site. The [4Fe-4S] cluster site is built by Cys-100 and Cys-134. 185–186 (NR) provides a ligand contact to ATP.

This sequence belongs to the NifH/BchL/ChlL family. As to quaternary structure, homodimer. Protochlorophyllide reductase is composed of three subunits; ChlL, ChlN and ChlB. Requires [4Fe-4S] cluster as cofactor.

The enzyme catalyses chlorophyllide a + oxidized 2[4Fe-4S]-[ferredoxin] + 2 ADP + 2 phosphate = protochlorophyllide a + reduced 2[4Fe-4S]-[ferredoxin] + 2 ATP + 2 H2O. It functions in the pathway porphyrin-containing compound metabolism; chlorophyll biosynthesis (light-independent). Its function is as follows. Component of the dark-operative protochlorophyllide reductase (DPOR) that uses Mg-ATP and reduced ferredoxin to reduce ring D of protochlorophyllide (Pchlide) to form chlorophyllide a (Chlide). This reaction is light-independent. The L component serves as a unique electron donor to the NB-component of the complex, and binds Mg-ATP. In Synechococcus sp. (strain JA-2-3B'a(2-13)) (Cyanobacteria bacterium Yellowstone B-Prime), this protein is Light-independent protochlorophyllide reductase iron-sulfur ATP-binding protein.